A 267-amino-acid polypeptide reads, in one-letter code: Phosphatidylserine decarboxylase proenzyme (267 aa).

Residues Asp78, His132, and Ser236 each act as charge relay system; for autoendoproteolytic cleavage activity in the active site. The active-site Schiff-base intermediate with substrate; via pyruvic acid; for decarboxylase activity is Ser236. Pyruvic acid (Ser); by autocatalysis is present on Ser236.

The protein belongs to the phosphatidylserine decarboxylase family. PSD-B subfamily. Prokaryotic type I sub-subfamily. In terms of assembly, heterodimer of a large membrane-associated beta subunit and a small pyruvoyl-containing alpha subunit. The cofactor is pyruvate. In terms of processing, is synthesized initially as an inactive proenzyme. Formation of the active enzyme involves a self-maturation process in which the active site pyruvoyl group is generated from an internal serine residue via an autocatalytic post-translational modification. Two non-identical subunits are generated from the proenzyme in this reaction, and the pyruvate is formed at the N-terminus of the alpha chain, which is derived from the carboxyl end of the proenzyme. The autoendoproteolytic cleavage occurs by a canonical serine protease mechanism, in which the side chain hydroxyl group of the serine supplies its oxygen atom to form the C-terminus of the beta chain, while the remainder of the serine residue undergoes an oxidative deamination to produce ammonia and the pyruvoyl prosthetic group on the alpha chain. During this reaction, the Ser that is part of the protease active site of the proenzyme becomes the pyruvoyl prosthetic group, which constitutes an essential element of the active site of the mature decarboxylase.

It localises to the cell membrane. The enzyme catalyses a 1,2-diacyl-sn-glycero-3-phospho-L-serine + H(+) = a 1,2-diacyl-sn-glycero-3-phosphoethanolamine + CO2. It participates in phospholipid metabolism; phosphatidylethanolamine biosynthesis; phosphatidylethanolamine from CDP-diacylglycerol: step 2/2. In terms of biological role, catalyzes the formation of phosphatidylethanolamine (PtdEtn) from phosphatidylserine (PtdSer). The chain is Phosphatidylserine decarboxylase proenzyme from Helicobacter pylori (strain Shi470).